Reading from the N-terminus, the 385-residue chain is Lipid-A-disaccharide synthase 2 (385 aa).

This sequence belongs to the LpxB family.

It catalyses the reaction a lipid X + a UDP-2-N,3-O-bis[(3R)-3-hydroxyacyl]-alpha-D-glucosamine = a lipid A disaccharide + UDP + H(+). It participates in bacterial outer membrane biogenesis; LPS lipid A biosynthesis. Its function is as follows. Condensation of UDP-2,3-diacylglucosamine and 2,3-diacylglucosamine-1-phosphate to form lipid A disaccharide, a precursor of lipid A, a phosphorylated glycolipid that anchors the lipopolysaccharide to the outer membrane of the cell. This chain is Lipid-A-disaccharide synthase 2, found in Legionella pneumophila (strain Paris).